The primary structure comprises 35 residues: Ranatuerin-2SPb (35 aa).

Residues cysteine 28 and cysteine 33 are joined by a disulfide bond.

In terms of tissue distribution, expressed by the skin glands.

It localises to the secreted. Its function is as follows. Antibacterial activity against Gram-positive bacterium S.aureus. Shows no detectable hemolytic activity towards human erythrocytes. This is Ranatuerin-2SPb from Lithobates septentrionalis (Mink frog).